The following is a 492-amino-acid chain: Cytochrome P450 2B12 (492 aa).

A Phosphoserine modification is found at serine 129. Cysteine 437 is a heme binding site.

Belongs to the cytochrome P450 family. It depends on heme as a cofactor. Preputial gland, but not in liver.

Its subcellular location is the endoplasmic reticulum membrane. The protein resides in the microsome membrane. The catalysed reaction is an organic molecule + reduced [NADPH--hemoprotein reductase] + O2 = an alcohol + oxidized [NADPH--hemoprotein reductase] + H2O + H(+). In terms of biological role, cytochromes P450 are a group of heme-thiolate monooxygenases. In liver microsomes, this enzyme is involved in an NADPH-dependent electron transport pathway. This isozyme seems responsible for metabolism of 2,2',4,4',5,5'-hexachlorobiphenyl. The polypeptide is Cytochrome P450 2B12 (Cyp2b12) (Rattus norvegicus (Rat)).